Here is a 1238-residue protein sequence, read N- to C-terminus: Erythroid differentiation-related factor 1 (1238 aa).

Disordered regions lie at residues 1-38 (MGDA…AQGS), 220-268 (QPVS…GSEP), 517-561 (PKKE…SDDS), and 620-647 (KKES…RGGP). 3 stretches are compositionally biased toward low complexity: residues 9 to 38 (AEGP…AQGS), 223 to 241 (SSTA…NDSE), and 253 to 263 (SSVSEDPSASS). The span at 530 to 547 (NSDESYSEEEEEMPDSDE) shows a compositional bias: acidic residues. TPR repeat units follow at residues 693–726 (SKAY…HDTY) and 914–953 (AQAH…LGTR).

It is found in the nucleus. Its function is as follows. Transcription factor involved in erythroid differentiation. Involved in transcriptional activation of the globin gene. The protein is Erythroid differentiation-related factor 1 (EDRF1) of Homo sapiens (Human).